Reading from the N-terminus, the 264-residue chain is S-adenosylmethionine decarboxylase proenzyme (264 aa).

The Schiff-base intermediate with substrate; via pyruvic acid role is filled by Ser113. Ser113 is modified (pyruvic acid (Ser); by autocatalysis). The Proton acceptor; for processing activity role is filled by His118. The active-site Proton donor; for catalytic activity is the Cys141.

Belongs to the prokaryotic AdoMetDC family. Type 2 subfamily. In terms of assembly, heterooctamer of four alpha and four beta chains arranged as a tetramer of alpha/beta heterodimers. It depends on pyruvate as a cofactor. Post-translationally, is synthesized initially as an inactive proenzyme. Formation of the active enzyme involves a self-maturation process in which the active site pyruvoyl group is generated from an internal serine residue via an autocatalytic post-translational modification. Two non-identical subunits are generated from the proenzyme in this reaction, and the pyruvate is formed at the N-terminus of the alpha chain, which is derived from the carboxyl end of the proenzyme. The post-translation cleavage follows an unusual pathway, termed non-hydrolytic serinolysis, in which the side chain hydroxyl group of the serine supplies its oxygen atom to form the C-terminus of the beta chain, while the remainder of the serine residue undergoes an oxidative deamination to produce ammonia and the pyruvoyl group blocking the N-terminus of the alpha chain.

It catalyses the reaction S-adenosyl-L-methionine + H(+) = S-adenosyl 3-(methylsulfanyl)propylamine + CO2. Its pathway is amine and polyamine biosynthesis; S-adenosylmethioninamine biosynthesis; S-adenosylmethioninamine from S-adenosyl-L-methionine: step 1/1. In terms of biological role, catalyzes the decarboxylation of S-adenosylmethionine to S-adenosylmethioninamine (dcAdoMet), the propylamine donor required for the synthesis of the polyamines spermine and spermidine from the diamine putrescine. This chain is S-adenosylmethionine decarboxylase proenzyme, found in Xanthomonas oryzae pv. oryzae (strain MAFF 311018).